The chain runs to 166 residues: Spiderine-1a (166 aa).

Residues 1 to 18 (MKFALVLLGVCAFYLVNA) form the signal peptide. Residues 19-58 (TGDLETELEASELQELQEALDLIGETPLESLEAEELEEAR) constitute a propeptide that is removed on maturation. A linear cationic cytotoxin domain region spans residues 59–99 (KFKWGKLFSTAKKLYKKGKKLSKNKNFKKALKFGKQLAKNL). In terms of domain architecture, Oxytoxin-type inhibitor cystine knot (ICK) spans 113 to 166 (NNKCWAIGTTCSDDCDCCPEHHCHCPAGKWLPGLFRCTCQVTESDKVNKCPPAE). Intrachain disulfides connect cysteine 116-cysteine 130, cysteine 123-cysteine 135, cysteine 127-cysteine 162, cysteine 129-cysteine 151, and cysteine 137-cysteine 149.

It belongs to the spiderine family. Cationic/spiderine subfamily. As to expression, expressed by the venom gland.

It localises to the secreted. Functionally, has antimicrobial, insecticidal, cytolytic and cytotoxic activity. Active against E.coli DH5alpha, E.faecalis VKM B 871, B.subtilis VKM B 501, A.globiformis VKM Ac 1112, P.aeruginosa PAO1 and S.aureus 209P in submicromolar or low micromolar ranges. Lyses human erythrocytes. Kills HeLA and A549 cells. This chain is Spiderine-1a, found in Oxyopes takobius (Lynx spider).